Reading from the N-terminus, the 424-residue chain is Adenylosuccinate synthetase (424 aa).

Residues 12–18 (GDEGKGK) and 40–42 (GHT) each bind GTP. Catalysis depends on Asp13, which acts as the Proton acceptor. Asp13 and Gly40 together coordinate Mg(2+). IMP-binding positions include 13 to 16 (DEGK), 38 to 41 (NAGH), Thr130, Arg144, Asn220, Thr235, and Arg299. His41 acts as the Proton donor in catalysis. Residue 295–301 (VTTGRRR) coordinates substrate. Residues Arg301, 327-329 (KLD), and 412-414 (GTG) contribute to the GTP site.

The protein belongs to the adenylosuccinate synthetase family. Homodimer. Mg(2+) is required as a cofactor.

It is found in the cytoplasm. It catalyses the reaction IMP + L-aspartate + GTP = N(6)-(1,2-dicarboxyethyl)-AMP + GDP + phosphate + 2 H(+). Its pathway is purine metabolism; AMP biosynthesis via de novo pathway; AMP from IMP: step 1/2. Plays an important role in the de novo pathway and in the salvage pathway of purine nucleotide biosynthesis. Catalyzes the first committed step in the biosynthesis of AMP from IMP. This is Adenylosuccinate synthetase from Aspergillus niger (strain ATCC MYA-4892 / CBS 513.88 / FGSC A1513).